Here is a 72-residue protein sequence, read N- to C-terminus: U-poneritoxin(01)-Om7a (72 aa).

The signal sequence occupies residues 1–27 (MKPSGLTFAFLVVFMMAIMYNSVQVTA). Positions 28–45 (DADADAEAEALANALAEA) are excised as a propeptide.

It belongs to the formicidae venom precursor-01 superfamily. In terms of tissue distribution, expressed by the venom gland.

It is found in the secreted. Peptide with unknown function that does not resemble any other pilosulin-like peptide and appears to have a coiled coil structure. The polypeptide is U-poneritoxin(01)-Om7a (Odontomachus monticola (Trap-jaw ant)).